A 232-amino-acid polypeptide reads, in one-letter code: GDT1-like protein 5 (232 aa).

6 helical membrane passes run 13 to 33, 40 to 60, 72 to 92, 135 to 155, 175 to 195, and 207 to 227; these read LAMT…AILA, LVLA…VSLG, THHV…WEGF, PFVL…TFFG, FGVV…AVMG, and MVGL…YLSG.

Belongs to the GDT1 family.

The protein localises to the membrane. This Oryza sativa subsp. japonica (Rice) protein is GDT1-like protein 5.